A 715-amino-acid chain; its full sequence is Polyribonucleotide nucleotidyltransferase (715 aa).

The Mg(2+) site is built by Asp-489 and Asp-495. The region spanning 556 to 615 is the KH domain; the sequence is PRIETLRIPTEKIREVIGTGGKVIREICEKTGAKINIEDDGTVKVASSDGNSIKAAINWI. The 69-residue stretch at 625–693 folds into the S1 motif domain; that stretch reads GHIYDGTVVK…DRGKVRLSMR (69 aa).

This sequence belongs to the polyribonucleotide nucleotidyltransferase family. It depends on Mg(2+) as a cofactor.

The protein resides in the cytoplasm. The enzyme catalyses RNA(n+1) + phosphate = RNA(n) + a ribonucleoside 5'-diphosphate. Involved in mRNA degradation. Catalyzes the phosphorolysis of single-stranded polyribonucleotides processively in the 3'- to 5'-direction. This is Polyribonucleotide nucleotidyltransferase from Beijerinckia indica subsp. indica (strain ATCC 9039 / DSM 1715 / NCIMB 8712).